The sequence spans 234 residues: HTH-type transcriptional regulator MT1864 (234 aa).

The 61-residue stretch at 15–75 (EQIEAKIVEL…LLLVDAYSDL (61 aa)) folds into the HTH tetR-type domain. The H-T-H motif DNA-binding region spans 38–57 (SLRAIARNLGMVSSAVYRYV).

Homodimer.

The protein resides in the cytoplasm. May participate in the regulatory network that controls the expression of MmpL lipid transporters. This is HTH-type transcriptional regulator MT1864 from Mycobacterium tuberculosis (strain CDC 1551 / Oshkosh).